The following is a 126-amino-acid chain: Heavy metal-associated isoprenylated plant protein 14 (126 aa).

The 67-residue stretch at A3–D69 folds into the HMA domain. C123 is modified (cysteine methyl ester). The S-farnesyl cysteine moiety is linked to residue C123. A propeptide spans V124–M126 (removed in mature form).

It belongs to the HIPP family.

Probable heavy-metal-binding protein. The polypeptide is Heavy metal-associated isoprenylated plant protein 14 (Arabidopsis thaliana (Mouse-ear cress)).